The sequence spans 511 residues: Sorting nexin MVP1 (511 aa).

The disordered stretch occupies residues M1–G36. The span at V25 to G36 shows a compositional bias: polar residues. Residues D128–T247 enclose the PX domain. Residues R172, S174, K198, and R213 each coordinate a 1,2-diacyl-sn-glycero-3-phospho-(1D-myo-inositol-3-phosphate).

This sequence belongs to the sorting nexin family. In terms of assembly, homodimer. Forms an autoinhibited tetramer consisting of 2 homodimers that self-interact, wherein the membrane-interacting BAR surfaces are sequestered and the PX lipid-binding sites are occluded. Interacts with VPS1.

It is found in the cytoplasm. It localises to the endosome membrane. Functionally, required for vacuolar protein sorting. Component of the retromer-mediated endosome-to-Golgi retrograde pathway. Required for efficient cargo export from the endosome, promoting VPS1-mediated fission of retromer-coated tubules that bud from the endosome. The polypeptide is Sorting nexin MVP1 (MVP1) (Saccharomyces cerevisiae (strain ATCC 204508 / S288c) (Baker's yeast)).